The following is a 93-amino-acid chain: YcgL domain-containing protein VIBHAR_01387 (93 aa).

The 84-residue stretch at 1-84 (MLCSIYKSSR…PPENLLEKYK (84 aa)) folds into the YcgL domain.

The chain is YcgL domain-containing protein VIBHAR_01387 from Vibrio campbellii (strain ATCC BAA-1116).